Here is a 508-residue protein sequence, read N- to C-terminus: Lysine--tRNA ligase (508 aa).

Residues glutamate 416 and glutamate 423 each contribute to the Mg(2+) site.

It belongs to the class-II aminoacyl-tRNA synthetase family. Homodimer. Mg(2+) is required as a cofactor.

The protein resides in the cytoplasm. It carries out the reaction tRNA(Lys) + L-lysine + ATP = L-lysyl-tRNA(Lys) + AMP + diphosphate. The chain is Lysine--tRNA ligase from Prochlorococcus marinus (strain MIT 9313).